The following is a 65-amino-acid chain: Putative per-hexamer repeat protein 2 (65 aa).

This is Putative per-hexamer repeat protein 2 (Phxr2) from Mus musculus (Mouse).